The chain runs to 39 residues: Neuropeptide F (39 aa).

Phe-39 carries the post-translational modification Phenylalanine amide.

It belongs to the NPY family. Neuronal somata and fibers.

Its subcellular location is the secreted. In terms of biological role, may have an important physiological role in neuroregulation. This Cornu aspersum (Brown garden snail) protein is Neuropeptide F.